We begin with the raw amino-acid sequence, 342 residues long: Glycerol-1-phosphate dehydrogenase [NAD(P)+] (342 aa).

Residues 84 to 88 (GRPID) and 106 to 109 (TAAS) contribute to the NAD(+) site. D111 is a binding site for substrate. S115 is a binding site for NAD(+). D160 contacts substrate. Residues D160 and H241 each coordinate Zn(2+). A substrate-binding site is contributed by H245. H260 contributes to the Zn(2+) binding site.

The protein belongs to the glycerol-1-phosphate dehydrogenase family. In terms of assembly, homodimer. Zn(2+) is required as a cofactor.

It localises to the cytoplasm. The catalysed reaction is sn-glycerol 1-phosphate + NAD(+) = dihydroxyacetone phosphate + NADH + H(+). It catalyses the reaction sn-glycerol 1-phosphate + NADP(+) = dihydroxyacetone phosphate + NADPH + H(+). It functions in the pathway membrane lipid metabolism; glycerophospholipid metabolism. Its function is as follows. Catalyzes the NAD(P)H-dependent reduction of dihydroxyacetonephosphate (DHAP or glycerone phosphate) to glycerol 1-phosphate (G1P). The G1P thus generated is used as the glycerophosphate backbone of phospholipids in the cellular membranes of Archaea. The chain is Glycerol-1-phosphate dehydrogenase [NAD(P)+] from Pyrobaculum aerophilum (strain ATCC 51768 / DSM 7523 / JCM 9630 / CIP 104966 / NBRC 100827 / IM2).